Consider the following 631-residue polypeptide: 1-deoxy-D-xylulose-5-phosphate synthase (631 aa).

Thiamine diphosphate is bound by residues histidine 87 and glycine 128 to serine 130. Aspartate 159 contacts Mg(2+). Residues glycine 160–alanine 161, asparagine 188, phenylalanine 295, and glutamate 378 contribute to the thiamine diphosphate site. Asparagine 188 contributes to the Mg(2+) binding site.

This sequence belongs to the transketolase family. DXPS subfamily. Homodimer. Mg(2+) serves as cofactor. Thiamine diphosphate is required as a cofactor.

The enzyme catalyses D-glyceraldehyde 3-phosphate + pyruvate + H(+) = 1-deoxy-D-xylulose 5-phosphate + CO2. Its pathway is metabolic intermediate biosynthesis; 1-deoxy-D-xylulose 5-phosphate biosynthesis; 1-deoxy-D-xylulose 5-phosphate from D-glyceraldehyde 3-phosphate and pyruvate: step 1/1. Its function is as follows. Catalyzes the acyloin condensation reaction between C atoms 2 and 3 of pyruvate and glyceraldehyde 3-phosphate to yield 1-deoxy-D-xylulose-5-phosphate (DXP). The protein is 1-deoxy-D-xylulose-5-phosphate synthase of Pseudomonas syringae pv. tomato (strain ATCC BAA-871 / DC3000).